Here is a 95-residue protein sequence, read N- to C-terminus: Small ribosomal subunit protein bS6 (95 aa).

This sequence belongs to the bacterial ribosomal protein bS6 family.

In terms of biological role, binds together with bS18 to 16S ribosomal RNA. The protein is Small ribosomal subunit protein bS6 of Exiguobacterium sibiricum (strain DSM 17290 / CCUG 55495 / CIP 109462 / JCM 13490 / 255-15).